The following is a 289-amino-acid chain: Protease HtpX (289 aa).

The next 2 membrane-spanning stretches (helical) occupy residues 6–26 (ILFLLTNLAITFVLGIVLNII) and 38–58 (TGILMMSLLFGFTGSLISLFM). H144 is a Zn(2+) binding site. E145 is a catalytic residue. H148 is a Zn(2+) binding site. Transmembrane regions (helical) follow at residues 152–172 (GDMVTMTLLQGVLNTFVIFLS) and 194–214 (LVFWVVDIALQMIFGILATMI). E223 lines the Zn(2+) pocket.

Belongs to the peptidase M48B family. Zn(2+) is required as a cofactor.

It is found in the cell inner membrane. The chain is Protease HtpX from Haemophilus ducreyi (strain 35000HP / ATCC 700724).